Consider the following 210-residue polypeptide: LexA repressor (210 aa).

The segment at residues 30-50 is a DNA-binding region (H-T-H motif); the sequence is RVEIAREIGFKSPNAAEEHLK. Active-site for autocatalytic cleavage activity residues include serine 127 and lysine 164.

It belongs to the peptidase S24 family. Homodimer.

It catalyses the reaction Hydrolysis of Ala-|-Gly bond in repressor LexA.. Its function is as follows. Represses a number of genes involved in the response to DNA damage (SOS response), including recA and lexA. In the presence of single-stranded DNA, RecA interacts with LexA causing an autocatalytic cleavage which disrupts the DNA-binding part of LexA, leading to derepression of the SOS regulon and eventually DNA repair. The polypeptide is LexA repressor (Actinobacillus pleuropneumoniae serotype 5b (strain L20)).